The following is a 95-amino-acid chain: UPF0512 protein H (95 aa).

It belongs to the UPF0512 family.

The sequence is that of UPF0512 protein H from Dictyostelium discoideum (Social amoeba).